A 411-amino-acid chain; its full sequence is Imidazolonepropionase (411 aa).

Fe(3+) is bound by residues His-75 and His-77. The Zn(2+) site is built by His-75 and His-77. 4-imidazolone-5-propanoate is bound by residues Arg-84, Tyr-147, and His-180. An N-formimidoyl-L-glutamate-binding site is contributed by Tyr-147. His-245 provides a ligand contact to Fe(3+). His-245 is a Zn(2+) binding site. Gln-248 lines the 4-imidazolone-5-propanoate pocket. Position 320 (Asp-320) interacts with Fe(3+). Asp-320 contributes to the Zn(2+) binding site. Asn-322 and Gly-324 together coordinate N-formimidoyl-L-glutamate. Position 325 (Thr-325) interacts with 4-imidazolone-5-propanoate.

Belongs to the metallo-dependent hydrolases superfamily. HutI family. Zn(2+) is required as a cofactor. Fe(3+) serves as cofactor.

It localises to the cytoplasm. It catalyses the reaction 4-imidazolone-5-propanoate + H2O = N-formimidoyl-L-glutamate. The protein operates within amino-acid degradation; L-histidine degradation into L-glutamate; N-formimidoyl-L-glutamate from L-histidine: step 3/3. In terms of biological role, catalyzes the hydrolytic cleavage of the carbon-nitrogen bond in imidazolone-5-propanoate to yield N-formimidoyl-L-glutamate. It is the third step in the universal histidine degradation pathway. The sequence is that of Imidazolonepropionase from Photobacterium profundum (strain SS9).